The sequence spans 356 residues: Protein-glutamate methylesterase/protein-glutamine glutaminase 2 (356 aa).

The Response regulatory domain maps to 4 to 121; it reads RALVVDDSAL…SQSMPEMAEE (118 aa). The residue at position 55 (Asp55) is a 4-aspartylphosphate. Residues 161–356 enclose the CheB-type methylesterase domain; that stretch reads KAAPRNILAI…MAEEIIRIIG (196 aa). Active-site residues include Ser173, His200, and Asp300.

This sequence belongs to the CheB family. In terms of processing, phosphorylated by CheA. Phosphorylation of the N-terminal regulatory domain activates the methylesterase activity.

The protein resides in the cytoplasm. The catalysed reaction is [protein]-L-glutamate 5-O-methyl ester + H2O = L-glutamyl-[protein] + methanol + H(+). The enzyme catalyses L-glutaminyl-[protein] + H2O = L-glutamyl-[protein] + NH4(+). In terms of biological role, involved in chemotaxis. Part of a chemotaxis signal transduction system that modulates chemotaxis in response to various stimuli. Catalyzes the demethylation of specific methylglutamate residues introduced into the chemoreceptors (methyl-accepting chemotaxis proteins or MCP) by CheR. Also mediates the irreversible deamidation of specific glutamine residues to glutamic acid. The polypeptide is Protein-glutamate methylesterase/protein-glutamine glutaminase 2 (Methanosarcina acetivorans (strain ATCC 35395 / DSM 2834 / JCM 12185 / C2A)).